Reading from the N-terminus, the 722-residue chain is Golgin subfamily A member 5 (722 aa).

Residues 1–689 (MSWFTDLAGR…IFLRRYPIAR (689 aa)) are Cytoplasmic-facing. Disordered stretches follow at residues 90–158 (TRSS…VKPI) and 194–215 (TLSDSGSSASLSTTGDPKSHEL). A compositionally biased stretch (low complexity) spans 91–109 (RSSIESSHNSSVNVSSHRS). The segment covering 134-148 (DKVHSSSQKETRKES) has biased composition (basic and acidic residues). Positions 149–158 (ASVNQAVKPI) are enriched in polar residues. A compositionally biased stretch (low complexity) spans 195-209 (LSDSGSSASLSTTGD). The stretch at 211–622 (KSHELSNLRL…LEHQLKNVQG (412 aa)) forms a coiled coil. Residues 690–710 (VFIIIYMALLHLWVMIVLLTY) form a helical; Anchor for type IV membrane protein membrane-spanning segment. Over 711–722 (TPEMHHDTPSGK) the chain is Lumenal.

The protein localises to the golgi apparatus membrane. Involved in maintaining Golgi structure. Stimulates the formation of Golgi stacks and ribbons. Involved in intra-Golgi retrograde transport. The chain is Golgin subfamily A member 5 (golga5) from Xenopus laevis (African clawed frog).